The primary structure comprises 731 residues: Nucleolar GTP-binding protein 2 (731 aa).

Position 1 is an N-acetylmethionine (Met1). The segment at 1–33 is disordered; the sequence is MVKPKYKGRSTINPSKASTNPDRVQGAGGQNMR. Residues 10–22 are compositionally biased toward polar residues; sequence STINPSKASTNPD. In terms of domain architecture, CP-type G spans 207–368; sequence WGELYKVIDS…LIDCPGVVYP (162 aa). Residues 317–324 and 361–365 contribute to the GTP site; these read GYPNVGKS and DCPGV. Positions 481-502 are disordered; the sequence is VVPEAAQNNPGEEVTETAGEGS. Ser504 is subject to Phosphoserine. Residues 555–589 show a composition bias toward acidic residues; the sequence is LEEELESFSDEEEEEQEQQRDDAEESSSEPEEENV. Disordered regions lie at residues 555 to 594 and 630 to 731; these read LEEE…NDTK and EKIF…RQKQ. Basic and acidic residues-rich tracts occupy residues 630–652 and 662–671; these read EKIF…DRAP and QREEEQEHSN. Composition is skewed to basic residues over residues 681-695 and 721-731; these read ERRR…KKVG and KHKRKKFRQKQ.

Belongs to the TRAFAC class YlqF/YawG GTPase family. NOG2 subfamily. Interacts with LYAR and RPL23A. Interacts with the nuclear importin-beta receptor and, at a lower extent, with importin-alpha. As to expression, widely expressed, with the highest expression level in testis.

The protein resides in the nucleus. Its subcellular location is the nucleolus. GTPase that associates with pre-60S ribosomal subunits in the nucleolus and is required for their nuclear export and maturation. May promote cell proliferation possibly by increasing p53/TP53 protein levels, and consequently those of its downstream product CDKN1A/p21, and decreasing RPL23A protein levels. This chain is Nucleolar GTP-binding protein 2 (GNL2), found in Homo sapiens (Human).